Consider the following 413-residue polypeptide: 1-deoxy-D-xylulose 5-phosphate reductoisomerase (413 aa).

NADPH contacts are provided by threonine 13, glycine 14, serine 15, isoleucine 16, lysine 40, asparagine 41, and asparagine 127. Residue lysine 128 participates in 1-deoxy-D-xylulose 5-phosphate binding. Glutamate 129 provides a ligand contact to NADPH. Aspartate 153 is a Mn(2+) binding site. 4 residues coordinate 1-deoxy-D-xylulose 5-phosphate: serine 154, glutamate 155, serine 184, and histidine 207. Glutamate 155 is a binding site for Mn(2+). Glycine 213 serves as a coordination point for NADPH. 1-deoxy-D-xylulose 5-phosphate-binding residues include serine 220, asparagine 225, lysine 226, and glutamate 229. Glutamate 229 serves as a coordination point for Mn(2+).

The protein belongs to the DXR family. Requires Mg(2+) as cofactor. It depends on Mn(2+) as a cofactor.

The enzyme catalyses 2-C-methyl-D-erythritol 4-phosphate + NADP(+) = 1-deoxy-D-xylulose 5-phosphate + NADPH + H(+). It functions in the pathway isoprenoid biosynthesis; isopentenyl diphosphate biosynthesis via DXP pathway; isopentenyl diphosphate from 1-deoxy-D-xylulose 5-phosphate: step 1/6. Catalyzes the NADPH-dependent rearrangement and reduction of 1-deoxy-D-xylulose-5-phosphate (DXP) to 2-C-methyl-D-erythritol 4-phosphate (MEP). The chain is 1-deoxy-D-xylulose 5-phosphate reductoisomerase from Nitrosomonas eutropha (strain DSM 101675 / C91 / Nm57).